A 113-amino-acid polypeptide reads, in one-letter code: uncharacterized protein (113 aa).

The next 3 membrane-spanning stretches (helical) occupy residues 9–31 (IFPS…SVIY), 36–58 (VLTI…YKFQ), and 71–90 (IMAL…VVAV).

It localises to the cell membrane. This is an uncharacterized protein from Archaeoglobus fulgidus (strain ATCC 49558 / DSM 4304 / JCM 9628 / NBRC 100126 / VC-16).